The chain runs to 374 residues: MIFDEDSSSVAQESGYMGVGSPYSSDVGRISMSDHWNKLTKPSSIKVVNHGNALNKADLIIEPLESGFALTLGNALRRVMMSSLRGFAVYGVEIENVLHEFTSISGVREDVTDILLNISMIRLKLSGMDNKVLSLKVKGPCEVRSGMIADTPDCTILNKDLLICTLDQDVDFNIKMYVNSGKGYVPAVKRKSINKFGLSDVPVNFIATNALYSPIKKASFRVESSRIGQFTDYDRLIMSVETDHSILPDEAVALAARILQDQFQQFINFDETDEPHQKVDTKDVLPYDSNLLRKVDELELSVRSYNCLKNDNITYIGDLVQKTESDMLRTPNFGRKSLNEINELLASMNLHLGMKIANWPPESIESLSKQYSEE.

Positions 1–270 (MIFDEDSSSV…DQFQQFINFD (270 aa)) are alpha N-terminal domain (alpha-NTD). An alpha C-terminal domain (alpha-CTD) region spans residues 282 to 374 (KDVLPYDSNL…ESLSKQYSEE (93 aa)).

Belongs to the RNA polymerase alpha chain family. In terms of assembly, homodimer. The RNAP catalytic core consists of 2 alpha, 1 beta, 1 beta' and 1 omega subunit. When a sigma factor is associated with the core the holoenzyme is formed, which can initiate transcription.

It catalyses the reaction RNA(n) + a ribonucleoside 5'-triphosphate = RNA(n+1) + diphosphate. Functionally, DNA-dependent RNA polymerase catalyzes the transcription of DNA into RNA using the four ribonucleoside triphosphates as substrates. In Ehrlichia ruminantium (strain Gardel), this protein is DNA-directed RNA polymerase subunit alpha.